The chain runs to 518 residues: Crotonobetaine/carnitine--CoA ligase (518 aa).

It belongs to the ATP-dependent AMP-binding enzyme family.

It catalyses the reaction 4-(trimethylamino)butanoate + ATP + CoA = 4-(trimethylamino)butanoyl-CoA + AMP + diphosphate. The catalysed reaction is crotonobetaine + ATP + CoA = crotonobetainyl-CoA + AMP + diphosphate. It carries out the reaction (R)-carnitine + ATP + CoA = (R)-carnitinyl-CoA + AMP + diphosphate. The protein operates within amine and polyamine metabolism; carnitine metabolism. In terms of biological role, catalyzes the transfer of CoA to carnitine, generating the initial carnitinyl-CoA needed for the CaiB reaction cycle. Also has activity toward crotonobetaine and gamma-butyrobetaine. This is Crotonobetaine/carnitine--CoA ligase from Proteus mirabilis (strain HI4320).